The sequence spans 274 residues: 2,3,4,5-tetrahydropyridine-2,6-dicarboxylate N-succinyltransferase (274 aa).

Residues arginine 104 and aspartate 141 each contribute to the substrate site.

It belongs to the transferase hexapeptide repeat family. Homotrimer.

The protein localises to the cytoplasm. It catalyses the reaction (S)-2,3,4,5-tetrahydrodipicolinate + succinyl-CoA + H2O = (S)-2-succinylamino-6-oxoheptanedioate + CoA. The protein operates within amino-acid biosynthesis; L-lysine biosynthesis via DAP pathway; LL-2,6-diaminopimelate from (S)-tetrahydrodipicolinate (succinylase route): step 1/3. The sequence is that of 2,3,4,5-tetrahydropyridine-2,6-dicarboxylate N-succinyltransferase from Shigella dysenteriae serotype 1 (strain Sd197).